Reading from the N-terminus, the 485-residue chain is E3 ubiquitin-protein ligase TRIM68 (485 aa).

The RING-type zinc-finger motif lies at 16 to 61 (CPICMTFLREPMSIDCGHSFCHSCLSGLWEIPGESQNWGYTCPLCR). The B box-type zinc finger occupies 93 to 134 (LKGDLCERHGEKLKMFCKEDVLIMCEACSQSPEHEAHSVVPM). Zn(2+) is bound by residues Cys-98, His-101, Cys-120, and His-126. Residues 207-239 (AEVAAALASLQREAAETMQKLELNHSELIQQSQ) adopt a coiled-coil conformation. Residues 285–481 (LKTDCRVLGL…NTAPLAICSL (197 aa)) form the B30.2/SPRY domain.

Belongs to the TRIM/RBCC family. In terms of assembly, interacts with AR/androgen receptor (via ligand-binding domain). Interacts with KAT5/TIP60. Auto-ubiquitinated. As to expression, widely expressed. Expressed at high levels in prostate cancer cell lines. Up-regulation could be restricted to androgen-dependent cells.

It is found in the cytoplasm. It localises to the perinuclear region. The protein localises to the nucleus. It carries out the reaction S-ubiquitinyl-[E2 ubiquitin-conjugating enzyme]-L-cysteine + [acceptor protein]-L-lysine = [E2 ubiquitin-conjugating enzyme]-L-cysteine + N(6)-ubiquitinyl-[acceptor protein]-L-lysine.. Its pathway is protein modification; protein ubiquitination. Functionally, functions as a ubiquitin E3 ligase. Acts as a coactivator of androgen receptor (AR) depending on its ubiquitin ligase activity. This Homo sapiens (Human) protein is E3 ubiquitin-protein ligase TRIM68 (TRIM68).